Consider the following 985-residue polypeptide: Exocyst complex component 4 (985 aa).

A coiled-coil region spans residues 36-70 (SETTEERQKEKQKIEAEFKRSDLRLNELVSRHDQQ). Residues serine 235, serine 456, serine 459, serine 682, and serine 686 each carry the phosphoserine modification. Residues 434–480 (DKSSHVGTSNNSDAFKEHRRNASDASVDDNLAGQLGGSGKGSTSGLF) are disordered.

The protein belongs to the SEC8 family. As to quaternary structure, the exocyst complex is composed of Sec3/Exoc1, Sec5/Exoc2, Sec6/Exoc3, Sec8/Exoc4, Sec10/Exoc5, Sec15/Exoc6, exo70/Exoc7 and Exo84/Exoc8. As to expression, abundant in the embryonic and larval glutamatergic neuromuscular junctions (NMJs), pre and postsynaptically.

Functionally, component of the exocyst complex involved in the docking of exocytic vesicles with fusion sites on the plasma membrane. Involved in regulation of synaptic microtubule formation, and also regulation of synaptic growth and glutamate receptor trafficking. Does not appear to be required for basal neurotransmission. The chain is Exocyst complex component 4 from Drosophila melanogaster (Fruit fly).